The sequence spans 1350 residues: 1-phosphatidylinositol 4,5-bisphosphate phosphodiesterase gamma plc-3 (1350 aa).

The interval 1–40 (MQHGSLGPSSSSRKTTVTSTAGSVHLHHRSSNGFSTASRA) is disordered. Residues 9–20 (SSSSRKTTVTST) show a composition bias toward low complexity. Residues 31–40 (SNGFSTASRA) show a composition bias toward polar residues. The region spanning 352–503 (HDMSRPLSHY…LKKKIIVKHK (152 aa)) is the PI-PLC X-box domain. Catalysis depends on residues His367 and His419. The segment at 570–594 (NPNDDTVSVSGDEEREEETPSGFGV) is disordered. SH2 domains follow at residues 605 to 704 (WFHG…TIPC) and 715 to 804 (WFSA…RFPV). In terms of domain architecture, SH3 spans 832-890 (DKEVQARALRPYRGTADDELSFPANVIITVLRKEEGLWRGRYGSLTGWFPSAHVQEILP). Residues 855-960 (ANVIITVLRK…WQNNLFELTR (106 aa)) form the PH domain. Residues 982 to 1092 (LSNLVVYCQA…CGYLLKPDYM (111 aa)) enclose the PI-PLC Y-box domain. The C2 domain maps to 1099–1220 (PTNTEKFATA…CGFRSVPLKN (122 aa)). A disordered region spans residues 1270–1350 (GDSIPREMAP…KFSFGKSSKS (81 aa)). The span at 1283-1329 (TSATDRSLDSPTNSESRATLLSGQRGSQDSMDSAAETSSIASGTISS) shows a compositional bias: polar residues. Residues 1340 to 1350 (KKFSFGKSSKS) show a composition bias toward low complexity.

Ca(2+) serves as cofactor. As to expression, expressed in intestine, isthmus of the pharynx, proximal gonad sheath cells, spermatheca and uterine sheath cells. In males, expressed in the valve cell, the vas deferens and retractor and ventral protactor muscles.

The catalysed reaction is a 1,2-diacyl-sn-glycero-3-phospho-(1D-myo-inositol-4,5-bisphosphate) + H2O = 1D-myo-inositol 1,4,5-trisphosphate + a 1,2-diacyl-sn-glycerol + H(+). Functionally, mediates the production of the second messenger molecules diacylglycerol (DAG) and inositol 1,4,5-trisphosphate (IP3) which plays an important role in the regulation of intracellular signaling cascades. Regulates basal and ovulatory sheath cell contractions by controlling Ca(2+) oscillations via IP3-mediated activation of IP3 receptor itr-1. In intestinal epithelial cells, regulates Ca(2+) oscillations which control posterior body wall muscle contractions required for defecation by IP3-mediated activation of itr-1 and probably by activating TRPM channels gon-2 and gtl-1 by reducing PIP2 levels. By activating tpa-1 via DAG production, required for the expression of antimicrobial peptide nlp-29 in the epidermis in response to fungal infection or physical injury. By triggering Ca(2+) transient via IP3-mediated activation of IPR3 receptor itr-1 in ASH sensory neurons, involved in avoidance behavior in response to nose touch. Probably by regulating neuronal transmission in ALA neurons, mediates the decrease in pharyngeal pumping and locomotion during the quiescent state that precedes each larval molt, downstream of lin-3 and receptor let-23 and upstream of tpa-1 but not itr-1. During embryogenesis, may play an role in epidermal morphogenesis together with plc-1. Probably downstream of receptor daf-2, regulates male-sex muscle excitability in the absence of food. The chain is 1-phosphatidylinositol 4,5-bisphosphate phosphodiesterase gamma plc-3 from Caenorhabditis elegans.